We begin with the raw amino-acid sequence, 293 residues long: Pyridoxal 5'-phosphate synthase subunit PdxS (293 aa).

Position 23 (Asp-23) interacts with D-ribose 5-phosphate. Lys-80 acts as the Schiff-base intermediate with D-ribose 5-phosphate in catalysis. D-ribose 5-phosphate is bound at residue Gly-152. Arg-164 contributes to the D-glyceraldehyde 3-phosphate binding site. Residues Gly-213 and 234 to 235 each bind D-ribose 5-phosphate; that span reads GS.

Belongs to the PdxS/SNZ family. In the presence of PdxT, forms a dodecamer of heterodimers.

The enzyme catalyses aldehydo-D-ribose 5-phosphate + D-glyceraldehyde 3-phosphate + L-glutamine = pyridoxal 5'-phosphate + L-glutamate + phosphate + 3 H2O + H(+). Its pathway is cofactor biosynthesis; pyridoxal 5'-phosphate biosynthesis. Its function is as follows. Catalyzes the formation of pyridoxal 5'-phosphate from ribose 5-phosphate (RBP), glyceraldehyde 3-phosphate (G3P) and ammonia. The ammonia is provided by the PdxT subunit. Can also use ribulose 5-phosphate and dihydroxyacetone phosphate as substrates, resulting from enzyme-catalyzed isomerization of RBP and G3P, respectively. This Dehalococcoides mccartyi (strain ATCC BAA-2266 / KCTC 15142 / 195) (Dehalococcoides ethenogenes (strain 195)) protein is Pyridoxal 5'-phosphate synthase subunit PdxS.